The following is a 121-amino-acid chain: LOB domain-containing protein 24 (121 aa).

An LOB domain is found at 4–105; sequence KRCAACKYLR…NELAKTQAEI (102 aa).

The protein belongs to the LOB domain-containing protein family.

In Arabidopsis thaliana (Mouse-ear cress), this protein is LOB domain-containing protein 24 (LBD24).